The chain runs to 890 residues: V-type proton ATPase subunit a, Golgi isoform (890 aa).

M1 is modified (N-acetylmethionine). Over 1–450 the chain is Cytoplasmic; the sequence is MNQEEAIFRS…DAYGIATYKE (450 aa). Residues 113-154 adopt a coiled-coil conformation; it reads LENVNDMVKEITDCESRARQLDESLDSLRSKLNDLLEQRQVI. S223 and S228 each carry phosphoserine. Positions 297–347 form a coiled coil; sequence LKKVKRVIDSLNGKIVSLNTRSSELVDTLNRQIDDLQRILDTTEQTLHTEL. The helical transmembrane segment at 451–469 threads the bilayer; it reads INAGLATVVTFPFMFAIMF. The Vacuolar segment spans residues 470–471; the sequence is GD. A helical transmembrane segment spans residues 472-488; it reads MGHGFILFLMALFLVLN. At 489–502 the chain is on the cytoplasmic side; sequence ERKFGAMHRDEIFD. Residues 503–532 form a helical membrane-spanning segment; the sequence is MAFTGRYVLLLMGAFSVYTGLLYNDIFSKS. The Vacuolar segment spans residues 533–580; that stretch reads MTIFKSGWQWPSTFRKGESIEAKKTGVYPFGLDFAWHGTDNGLLFSNS. Residues 581–600 form a helical membrane-spanning segment; it reads YKMKLSILMGYAHMTYSFMF. The Cytoplasmic segment spans residues 601-618; it reads SYINYRAKNSKVDIIGNF. A helical transmembrane segment spans residues 619–639; the sequence is IPGLVFMQSIFGYLSWAIVYK. Over 640-682 the chain is Vacuolar; that stretch reads WSKDWIKDDKPAPGLLNMLINMFLAPGTIDDQLYSGQAKLQVV. Residues 683-702 form a helical membrane-spanning segment; it reads LLLAALVCVPWLLLYKPLTL. Residues 703 to 779 are Cytoplasmic-facing; the sequence is RRLNKNGGGG…DVMIHQVIHT (77 aa). The chain crosses the membrane as a helical span at residues 780 to 804; that stretch reads IEFCLNCISHTASYLRLWALSLAHA. The Vacuolar segment spans residues 805–828; it reads QLSSVLWDMTISNAFSSKNSGSPL. A helical transmembrane segment spans residues 829 to 867; it reads AVMKVVFLFAMWFVLTVCILVFMEGTSAMLHALRLHWVE. Over 868–890 the chain is Cytoplasmic; it reads AMSKFFEGEGYAYEPFSFRAIIE.

Belongs to the V-ATPase 116 kDa subunit family. In terms of assembly, V-ATPase is a heteromultimeric enzyme composed of a peripheral catalytic V1 complex (components A to H) attached to an integral membrane V0 proton pore complex (components: a, c, c', c'', d, e, f and VOA1). Post-translationally, glycosylated.

Its subcellular location is the endosome membrane. It is found in the golgi apparatus membrane. Functionally, subunit of the V0 complex of vacuolar(H+)-ATPase (V-ATPase), a multisubunit enzyme composed of a peripheral complex (V1) that hydrolyzes ATP and a membrane integral complex (V0) that translocates protons. V-ATPase is responsible for acidifying and maintaining the pH of intracellular compartments. Is present only in Golgi- and endosome-residing V-ATPase complexes; enzymes containing this subunit have a 4-fold lower ratio of proton transport to ATP hydrolysis than complexes containing the vacuolar isoform and do not dissociate V1 and V0 in response to glucose depletion. The chain is V-type proton ATPase subunit a, Golgi isoform (STV1) from Saccharomyces cerevisiae (strain ATCC 204508 / S288c) (Baker's yeast).